We begin with the raw amino-acid sequence, 167 residues long: Mitochondrial fission 1 protein B (167 aa).

The TPR repeat unit spans residues 92-125; sequence REKLYLLALGYYRSGDFSRSRDCIERCLEVEPES. The helical transmembrane segment at 144-164 threads the bilayer; sequence VIGVGIAVTAVGVVAGIAAAI.

It belongs to the FIS1 family. As to quaternary structure, interacts with PEX11A, PEX11B, PEX11C, PEX11D and PEX11E.

It localises to the mitochondrion outer membrane. It is found in the peroxisome membrane. Component of the peroxisomal and mitochondrial division machineries. Plays a role in promoting the fission of mitochondria and peroxisomes. In association with PEX11C, PEX11D, PEX11E and DRP3A, is involved in cell cycle-associated constitutive self-replication of preexisting peroxisomes. This is Mitochondrial fission 1 protein B (FIS1B) from Arabidopsis thaliana (Mouse-ear cress).